A 137-amino-acid polypeptide reads, in one-letter code: Large-conductance mechanosensitive channel (137 aa).

The next 2 membrane-spanning stretches (helical) occupy residues 10–30 and 76–96; these read FAMRGNVVDLAVGVIIGAAFG and GVFIQNVFDFIIVAFAIFMAI.

Belongs to the MscL family. In terms of assembly, homopentamer.

The protein localises to the cell inner membrane. Functionally, channel that opens in response to stretch forces in the membrane lipid bilayer. May participate in the regulation of osmotic pressure changes within the cell. This chain is Large-conductance mechanosensitive channel, found in Klebsiella pneumoniae subsp. pneumoniae (strain ATCC 700721 / MGH 78578).